Consider the following 427-residue polypeptide: Serine--tRNA ligase (427 aa).

An L-serine-binding site is contributed by 231-233 (TAE). 262–264 (RSE) is an ATP binding site. Position 285 (Glu-285) interacts with L-serine. ATP is bound at residue 349-352 (EISS). Residue Ser-385 coordinates L-serine.

The protein belongs to the class-II aminoacyl-tRNA synthetase family. Type-1 seryl-tRNA synthetase subfamily. Homodimer. The tRNA molecule binds across the dimer.

The protein resides in the cytoplasm. It catalyses the reaction tRNA(Ser) + L-serine + ATP = L-seryl-tRNA(Ser) + AMP + diphosphate + H(+). The catalysed reaction is tRNA(Sec) + L-serine + ATP = L-seryl-tRNA(Sec) + AMP + diphosphate + H(+). It participates in aminoacyl-tRNA biosynthesis; selenocysteinyl-tRNA(Sec) biosynthesis; L-seryl-tRNA(Sec) from L-serine and tRNA(Sec): step 1/1. Its function is as follows. Catalyzes the attachment of serine to tRNA(Ser). Is also able to aminoacylate tRNA(Sec) with serine, to form the misacylated tRNA L-seryl-tRNA(Sec), which will be further converted into selenocysteinyl-tRNA(Sec). This chain is Serine--tRNA ligase, found in Rhizobium rhizogenes (strain K84 / ATCC BAA-868) (Agrobacterium radiobacter).